A 925-amino-acid polypeptide reads, in one-letter code: Ectonucleotide pyrophosphatase/phosphodiesterase family member 1 (925 aa).

The span at 1–17 (MERDGCAGGGSRGGEGG) shows a compositional bias: gly residues. The disordered stretch occupies residues 1–43 (MERDGCAGGGSRGGEGGRAPREGPAGNGRDRGRSHAAEAPGDP). Residues 1-76 (MERDGCAGGG…RTAKDPNTYK (76 aa)) lie on the Cytoplasmic side of the membrane. A Di-leucine motif motif is present at residues 45–52 (AAASLLAP). Residues 77–97 (VLSLVLSVCVLTTILGCIFGL) form a helical; Signal-anchor for type II membrane protein membrane-spanning segment. Over 98 to 925 (KPSCAKEVKS…THLPTFSQED (828 aa)) the chain is Extracellular. 2 SMB domains span residues 104–144 (EVKS…IEPE) and 145–189 (HIWT…GEKS). 10 cysteine pairs are disulfide-bonded: Cys-108–Cys-122, Cys-112–Cys-140, Cys-120–Cys-133, Cys-126–Cys-132, Cys-149–Cys-166, Cys-154–Cys-184, Cys-164–Cys-177, Cys-170–Cys-176, Cys-195–Cys-241, and Cys-203–Cys-415. A glycan (N-linked (GlcNAc...) asparagine) is linked at Asn-179. Residues 191–591 (VEEPCESINE…APNNGTHGSL (401 aa)) are phosphodiesterase. Positions 218, 256, and 277 each coordinate AMP. Zn(2+) is bound by residues Asp-218 and Thr-256. Thr-256 serves as the catalytic AMP-threonine intermediate. CMP-binding residues include Thr-256 and Asn-277. Residues Thr-256 and Asn-277 each coordinate dTMP. The GMP site is built by Thr-256 and Asn-277. Thr-256 bears the Phosphothreonine mark. N-linked (GlcNAc...) asparagine glycosylation occurs at Asn-285. The GMP site is built by Leu-290, Lys-295, and Tyr-340. Residues Lys-295 and Tyr-340 each coordinate AMP. 2 residues coordinate CMP: Lys-295 and Tyr-340. Tyr-340 is a binding site for dTMP. N-linked (GlcNAc...) asparagine glycosylation is present at Asn-341. Asp-376 is an AMP binding site. Zn(2+)-binding residues include Asp-376, His-380, Asp-423, and His-424. Residue Asp-376 participates in CMP binding. Asp-376 serves as a coordination point for dTMP. A GMP-binding site is contributed by Asp-376. His-380 is a 2',3'-cGAMP binding site. His-424 provides a ligand contact to AMP. His-424 is a CMP binding site. His-424 is a dTMP binding site. Residue His-424 coordinates GMP. 6 cysteine pairs are disulfide-bonded: Cys-431-Cys-530, Cys-480-Cys-868, Cys-614-Cys-672, Cys-626-Cys-726, Cys-628-Cys-711, and Cys-838-Cys-848. A glycan (N-linked (GlcNAc...) asparagine) is linked at Asn-477. Ser-532 is a 2',3'-cGAMP binding site. An AMP-binding site is contributed by His-535. His-535 is a binding site for Zn(2+). Position 535 (His-535) interacts with CMP. His-535 contributes to the dTMP binding site. His-535 provides a ligand contact to GMP. Asn-585, Asn-643, Asn-700, Asn-731, and Asn-748 each carry an N-linked (GlcNAc...) asparagine glycan. A linker region spans residues 597–647 (NPVYTPKHPKEVHPLVQCPFTRNPRDNLGCSCNPSILPIEDFQTQFNLTVA). A nuclease-like domain region spans residues 654-925 (HETLPYGRPR…THLPTFSQED (272 aa)). Residues Asp-800, Asp-802, Asp-804, Arg-806, and Asp-808 each coordinate Ca(2+).

It belongs to the nucleotide pyrophosphatase/phosphodiesterase family. In terms of assembly, homodimer. Interacts with INSR; leading to inhibit INSR autophosphorylation and subsequent activation of INSR kinase activity. As to quaternary structure, monomeric. Requires Zn(2+) as cofactor. Post-translationally, autophosphorylated as part of the catalytic cycle of phosphodiesterase/pyrophosphatase activity. In terms of processing, N-glycosylated. The secreted form is produced through cleavage at Lys-103 by intracellular processing. As to expression, expressed in plasma cells and also in a number of non-lymphoid tissues, including the distal convoluted tubule of the kidney, chondrocytes and epididymis. Expressed in melanocytes but not in keratinocytes.

The protein resides in the cell membrane. It is found in the basolateral cell membrane. The protein localises to the secreted. The catalysed reaction is Hydrolytically removes 5'-nucleotides successively from the 3'-hydroxy termini of 3'-hydroxy-terminated oligonucleotides.. It catalyses the reaction a ribonucleoside 5'-triphosphate + H2O = a ribonucleoside 5'-phosphate + diphosphate + H(+). The enzyme catalyses ATP + H2O = AMP + diphosphate + H(+). It carries out the reaction UTP + H2O = UMP + diphosphate + H(+). The catalysed reaction is GTP + H2O = GMP + diphosphate + H(+). It catalyses the reaction CTP + H2O = CMP + diphosphate + H(+). The enzyme catalyses 2',3'-cGAMP + 2 H2O = GMP + AMP + 2 H(+). It carries out the reaction P(1),P(4)-bis(5'-adenosyl) tetraphosphate + H2O = AMP + ATP + 2 H(+). The catalysed reaction is 3',5'-cyclic AMP + H2O = AMP + H(+). Its activity is regulated as follows. At low concentrations of ATP, a phosphorylated intermediate is formed which inhibits further hydrolysis. In terms of biological role, nucleotide pyrophosphatase that generates diphosphate (PPi) and functions in bone mineralization and soft tissue calcification by regulating pyrophosphate levels. PPi inhibits bone mineralization and soft tissue calcification by binding to nascent hydroxyapatite crystals, thereby preventing further growth of these crystals. Preferentially hydrolyzes ATP, but can also hydrolyze other nucleoside 5' triphosphates such as GTP, CTP and UTP to their corresponding monophosphates with release of pyrophosphate, as well as diadenosine polyphosphates, and also 3',5'-cAMP to AMP. May also be involved in the regulation of the availability of nucleotide sugars in the endoplasmic reticulum and Golgi, and the regulation of purinergic signaling. Inhibits ectopic joint calcification and maintains articular chondrocytes by repressing hedgehog signaling; it is however unclear whether hedgehog inhibition is direct or indirect. Appears to modulate insulin sensitivity and function. Also involved in melanogenesis. Also able to hydrolyze 2',3'-cGAMP (cyclic GMP-AMP), a second messenger that activates TMEM173/STING and triggers type-I interferon production. 2',3'-cGAMP degradation takes place in the lumen or extracellular space, and not in the cytosol where it is produced; the role of 2',3'-cGAMP hydrolysis is therefore unclear. Not able to hydrolyze the 2',3'-cGAMP linkage isomer 3'-3'-cGAMP. This chain is Ectonucleotide pyrophosphatase/phosphodiesterase family member 1, found in Homo sapiens (Human).